The chain runs to 66 residues: Large ribosomal subunit protein uL29 (66 aa).

The protein belongs to the universal ribosomal protein uL29 family.

The sequence is that of Large ribosomal subunit protein uL29 from Fervidobacterium nodosum (strain ATCC 35602 / DSM 5306 / Rt17-B1).